A 120-amino-acid polypeptide reads, in one-letter code: ATP-dependent Clp protease adapter protein ClpS (120 aa).

It belongs to the ClpS family. In terms of assembly, binds to the N-terminal domain of the chaperone ClpA.

Its function is as follows. Involved in the modulation of the specificity of the ClpAP-mediated ATP-dependent protein degradation. The chain is ATP-dependent Clp protease adapter protein ClpS from Pseudomonas syringae pv. tomato (strain ATCC BAA-871 / DC3000).